A 665-amino-acid polypeptide reads, in one-letter code: Intraflagellar transport protein 70A (665 aa).

TPR repeat units follow at residues 11–44, 45–78, 154–187, 189–221, 393–424, 425–457, and 459–492; these read DGEF…SPRS, RAGL…HPEL, TDGQ…SGYQ, DLSY…GIRQ, LTKQ…EKYI, PVLM…CNDH, and VWKL…HYDN. Positions 508-535 form a coiled coil; the sequence is YIMTSQNEEAEELMRKIEKEEEQLSYDD. The stretch at 544–577 is one TPR 8 repeat; sequence CIVNLVIGTLYCAKGNYEFGISRVIKSLEPYNKK.

It belongs to the TTC30/dfy-1/fleer family.

It is found in the cell projection. The protein localises to the cilium. In terms of biological role, required for polyglutamylation of axonemal tubulin. Plays a role in anterograde intraflagellar transport (IFT), the process by which cilia precursors are transported from the base of the cilium to the site of their incorporation at the tip. In Homo sapiens (Human), this protein is Intraflagellar transport protein 70A.